Consider the following 294-residue polypeptide: Protease HtpX homolog 2 (294 aa).

A run of 2 helical transmembrane segments spans residues 15–35 (MLFTMFLLAAVYLFFLAFLSY) and 36–56 (YGTSQIFIILFIGLFMAAQYF). Residue His-140 participates in Zn(2+) binding. The active site involves Glu-141. Zn(2+) is bound at residue His-144. 2 helical membrane passes run 151 to 171 (AVLTIASFLSSVAFYIVRYSL) and 185 to 205 (GGIMLVWLVSIVVWIVSFLLI). Glu-213 lines the Zn(2+) pocket.

The protein belongs to the peptidase M48B family. Zn(2+) is required as a cofactor.

It localises to the cell membrane. The sequence is that of Protease HtpX homolog 2 from Methanosarcina mazei (strain ATCC BAA-159 / DSM 3647 / Goe1 / Go1 / JCM 11833 / OCM 88) (Methanosarcina frisia).